The sequence spans 442 residues: Probable alpha-galactosidase B (442 aa).

The first 19 residues, 1-19, serve as a signal peptide directing secretion; that stretch reads MQRYISLSVSLSLLSGANA. Cystine bridges form between C42–C74 and C124–C154. D152 acts as the Nucleophile in catalysis. 4 N-linked (GlcNAc...) asparagine glycosylation sites follow: N159, N173, N179, and N215. 224–228 contacts substrate; that stretch reads EWGQA. N-linked (GlcNAc...) asparagine glycosylation is present at N235. D246 functions as the Proton donor in the catalytic mechanism. N-linked (GlcNAc...) asparagine glycosylation occurs at N285.

This sequence belongs to the glycosyl hydrolase 27 family.

It localises to the secreted. It catalyses the reaction Hydrolysis of terminal, non-reducing alpha-D-galactose residues in alpha-D-galactosides, including galactose oligosaccharides, galactomannans and galactolipids.. Hydrolyzes a variety of simple alpha-D-galactoside as well as more complex molecules such as oligosaccharides and polysaccharides. This chain is Probable alpha-galactosidase B (aglB), found in Aspergillus oryzae (strain ATCC 42149 / RIB 40) (Yellow koji mold).